Reading from the N-terminus, the 353-residue chain is H(2)-forming methylenetetrahydromethanopterin dehydrogenase-related protein MJ1338 (353 aa).

It belongs to the HMD family.

The protein is H(2)-forming methylenetetrahydromethanopterin dehydrogenase-related protein MJ1338 of Methanocaldococcus jannaschii (strain ATCC 43067 / DSM 2661 / JAL-1 / JCM 10045 / NBRC 100440) (Methanococcus jannaschii).